Consider the following 716-residue polypeptide: Leucine-rich repeat neuronal protein 1 (716 aa).

The N-terminal stretch at 1-25 (MARLSTGKAACQVVLGLLITSLTES) is a signal peptide. The region spanning 26–72 (SILTSECPQLCVCEIRPWFTPQSTYREATTVDCNDLRLTRIPGNLSS) is the LRRNT domain. At 26-631 (SILTSECPQL…DISDHETSTA (606 aa)) the chain is on the extracellular side. Asn-69 carries an N-linked (GlcNAc...) asparagine glycan. LRR repeat units lie at residues 73 to 95 (DTQV…QQLF), 96 to 117 (NLTE…GLAN), 120 to 141 (QLTT…CLQD), 144 to 165 (NLQE…AFSG), 168 to 189 (NLLR…WFDS), 192 to 213 (NLEI…NFRP), 216 to 237 (NLRS…ALVG), 240 to 261 (SLES…ALQK), and 264 to 285 (NLKF…DFKN). Residues Asn-96 and Asn-117 are each glycosylated (N-linked (GlcNAc...) asparagine). Residues 371–424 (NPLRCDCVIHWINSNKTNIRFMEPLSMFCAMPPEYRGQQVKEVLIQDSSEQCLP) form the LRRCT domain. A glycan (N-linked (GlcNAc...) asparagine) is linked at Asn-385. One can recognise an Ig-like C2-type domain in the interval 424–515 (PMISHDTFPN…GADTRVATIK (92 aa)). Cys-447 and Cys-499 are disulfide-bonded. Residue Asn-517 is glycosylated (N-linked (GlcNAc...) asparagine). A Fibronectin type-III domain is found at 525–619 (QVLKIYVKQT…VNVTTKTAAF (95 aa)). Residues 632-652 (LAAVMGSMFAVISLASIAIYI) traverse the membrane as a helical segment. The Cytoplasmic segment spans residues 653–716 (AKRFKRKNYH…VDTSRSYYMW (64 aa)). Positions 692 to 716 (SDKDKDGSADTKPTQVDTSRSYYMW) are disordered. Residues 702-716 (TKPTQVDTSRSYYMW) are compositionally biased toward polar residues.

Expressed in brain.

It is found in the membrane. The polypeptide is Leucine-rich repeat neuronal protein 1 (Lrrn1) (Mus musculus (Mouse)).